Reading from the N-terminus, the 174-residue chain is Protein FanG (174 aa).

Positions 1 to 21 are cleaved as a signal peptide; it reads MKKLYKAITVICILMSNLQSA. Cys-41 and Cys-75 are joined by a disulfide.

It is found in the fimbrium. Its function is as follows. Involved in the biosynthesis of K99 fimbriae. This chain is Protein FanG (fanG), found in Escherichia coli.